The chain runs to 392 residues: Stilbene synthase 6 (392 aa).

Residue 55-58 (KFNR) coordinates substrate. Cys164 is an active-site residue. Substrate contacts are provided by residues Leu267 and 305–307 (GGP).

It belongs to the thiolase-like superfamily. Chalcone/stilbene synthases family. Homodimer.

It is found in the cytoplasm. The enzyme catalyses 4-coumaroyl-CoA + 3 malonyl-CoA + 3 H(+) = trans-resveratrol + 4 CO2 + 4 CoA. The protein operates within phytoalexin biosynthesis; 3,4',5-trihydroxystilbene biosynthesis; 3,4',5-trihydroxystilbene from trans-4-coumarate: step 2/2. In terms of biological role, mediates resistance to pathogens which are sensitive to stilbenes. The polypeptide is Stilbene synthase 6 (STS) (Vitis vinifera (Grape)).